Consider the following 495-residue polypeptide: UDP-N-acetylmuramoyl-L-alanyl-D-glutamate--2,6-diaminopimelate ligase (495 aa).

UDP-N-acetyl-alpha-D-muramoyl-L-alanyl-D-glutamate is bound by residues Leu27, Ser29, and 44 to 46; that span reads HQA. ATP is bound at residue 116 to 122; the sequence is GTNGKTT. UDP-N-acetyl-alpha-D-muramoyl-L-alanyl-D-glutamate-binding positions include Asn157, 158–159, Ser185, Gln191, and Arg193; that span reads TT. N6-carboxylysine is present on Lys225. Meso-2,6-diaminopimelate contacts are provided by residues Arg390, 414 to 417, Gly465, and Glu469; that span reads DNPR. The Meso-diaminopimelate recognition motif signature appears at 414–417; it reads DNPR.

It belongs to the MurCDEF family. MurE subfamily. The cofactor is Mg(2+). In terms of processing, carboxylation is probably crucial for Mg(2+) binding and, consequently, for the gamma-phosphate positioning of ATP.

Its subcellular location is the cytoplasm. The enzyme catalyses UDP-N-acetyl-alpha-D-muramoyl-L-alanyl-D-glutamate + meso-2,6-diaminopimelate + ATP = UDP-N-acetyl-alpha-D-muramoyl-L-alanyl-gamma-D-glutamyl-meso-2,6-diaminopimelate + ADP + phosphate + H(+). It participates in cell wall biogenesis; peptidoglycan biosynthesis. In terms of biological role, catalyzes the addition of meso-diaminopimelic acid to the nucleotide precursor UDP-N-acetylmuramoyl-L-alanyl-D-glutamate (UMAG) in the biosynthesis of bacterial cell-wall peptidoglycan. The protein is UDP-N-acetylmuramoyl-L-alanyl-D-glutamate--2,6-diaminopimelate ligase of Salmonella choleraesuis (strain SC-B67).